Here is a 226-residue protein sequence, read N- to C-terminus: 2,3-bisphosphoglycerate-dependent phosphoglycerate mutase (226 aa).

Substrate contacts are provided by residues 8–15 (RHGQSVWN), 21–22 (TG), arginine 58, 109–112 (ERMY), lysine 120, 136–137 (RR), and 180–181 (GN). Histidine 9 serves as the catalytic Tele-phosphohistidine intermediate. The active-site Proton donor/acceptor is the glutamate 109.

This sequence belongs to the phosphoglycerate mutase family. BPG-dependent PGAM subfamily.

It carries out the reaction (2R)-2-phosphoglycerate = (2R)-3-phosphoglycerate. It functions in the pathway carbohydrate degradation; glycolysis; pyruvate from D-glyceraldehyde 3-phosphate: step 3/5. Functionally, catalyzes the interconversion of 2-phosphoglycerate and 3-phosphoglycerate. This Chlamydia trachomatis serovar A (strain ATCC VR-571B / DSM 19440 / HAR-13) protein is 2,3-bisphosphoglycerate-dependent phosphoglycerate mutase.